A 325-amino-acid chain; its full sequence is GMP reductase (325 aa).

The active-site Thioimidate intermediate is the C174. 203–226 (LIADGGIRTHGDIAKSIRFGASMV) is an NADP(+) binding site.

The protein belongs to the IMPDH/GMPR family. GuaC type 2 subfamily.

The enzyme catalyses IMP + NH4(+) + NADP(+) = GMP + NADPH + 2 H(+). In terms of biological role, catalyzes the irreversible NADPH-dependent deamination of GMP to IMP. It functions in the conversion of nucleobase, nucleoside and nucleotide derivatives of G to A nucleotides, and in maintaining the intracellular balance of A and G nucleotides. The sequence is that of GMP reductase from Staphylococcus aureus (strain MRSA252).